Reading from the N-terminus, the 77-residue chain is Small nuclear ribonucleoprotein G (77 aa).

Positions 4-76 constitute a Sm domain; it reads AGAPDLKKYL…VIMIETLDKM (73 aa).

It belongs to the snRNP Sm proteins family. As to quaternary structure, belongs to the 40S cdc5-associated complex (or cwf complex), a spliceosome sub-complex reminiscent of a late-stage spliceosome composed of the U2, U5 and U6 snRNAs and at least brr2, cdc5, cwf2/prp3, cwf3/syf1, cwf4/syf3, cwf5/ecm2, spp42/cwf6, cwf7/spf27, cwf8, cwf9, cwf10, cwf11, cwf12, prp45/cwf13, cwf14, cwf15, cwf16, cwf17, cwf18, cwf19, cwf20, cwf21, cwf22, cwf23, cwf24, cwf25, cwf26, cyp7/cwf27, cwf28, cwf29/ist3, lea1, msl1, prp5/cwf1, prp10, prp12/sap130, prp17, prp22, sap61, sap62, sap114, sap145, slu7, smb1, smd1, smd3, smf1, smg1 and syf2.

Its subcellular location is the nucleus. It is found in the cytoplasm. Its function is as follows. Plays a role in pre-mRNA splicing as a core component of the spliceosomal U1, U2, U4 and U5 small nuclear ribonucleoproteins (snRNPs), the building blocks of the spliceosome. The protein is Small nuclear ribonucleoprotein G (smg1) of Schizosaccharomyces pombe (strain 972 / ATCC 24843) (Fission yeast).